Here is a 48-residue protein sequence, read N- to C-terminus: ATP synthase protein 8 (48 aa).

A helical transmembrane segment spans residues 4-24 (LVPFFFVNQVVYAFVILTVLI).

The protein belongs to the ATPase protein 8 family. In terms of assembly, F-type ATPases have 2 components, CF(1) - the catalytic core - and CF(0) - the membrane proton channel.

The protein resides in the mitochondrion membrane. Its function is as follows. Mitochondrial membrane ATP synthase (F(1)F(0) ATP synthase or Complex V) produces ATP from ADP in the presence of a proton gradient across the membrane which is generated by electron transport complexes of the respiratory chain. F-type ATPases consist of two structural domains, F(1) - containing the extramembraneous catalytic core and F(0) - containing the membrane proton channel, linked together by a central stalk and a peripheral stalk. During catalysis, ATP synthesis in the catalytic domain of F(1) is coupled via a rotary mechanism of the central stalk subunits to proton translocation. Part of the complex F(0) domain. Minor subunit located with subunit a in the membrane. The protein is ATP synthase protein 8 (atp8) of Aspergillus amstelodami.